A 257-amino-acid chain; its full sequence is Small ribosomal subunit protein uS2 (257 aa).

A disordered region spans residues 229–257; it reads QFTPATTSSQEVDKASEQVEIAADDIDEE.

It belongs to the universal ribosomal protein uS2 family.

The polypeptide is Small ribosomal subunit protein uS2 (Caldicellulosiruptor bescii (strain ATCC BAA-1888 / DSM 6725 / KCTC 15123 / Z-1320) (Anaerocellum thermophilum)).